We begin with the raw amino-acid sequence, 152 residues long: Ribonuclease pancreatic gamma-type (152 aa).

The N-terminal stretch at 1-25 is a signal peptide; the sequence is MGLEKSFILFSLLVLVLGCVQPSLV. Residues 26-48 form a disordered region; it reads GESKESPSEKFKRRHMDEEGPYQ. A compositionally biased stretch (basic and acidic residues) spans 27–43; that stretch reads ESKESPSEKFKRRHMDE. Lysine 35 and arginine 38 together coordinate substrate. Histidine 40 functions as the Proton acceptor in the catalytic mechanism. Disulfide bonds link cysteine 54–cysteine 112, cysteine 68–cysteine 123, cysteine 86–cysteine 138, and cysteine 93–cysteine 100. Substrate contacts are provided by residues 69-73 and lysine 94; that span reads KPLNT. The active-site Proton donor is histidine 147.

It belongs to the pancreatic ribonuclease family. In terms of assembly, monomer.

The protein localises to the secreted. The enzyme catalyses an [RNA] containing cytidine + H2O = an [RNA]-3'-cytidine-3'-phosphate + a 5'-hydroxy-ribonucleotide-3'-[RNA].. It catalyses the reaction an [RNA] containing uridine + H2O = an [RNA]-3'-uridine-3'-phosphate + a 5'-hydroxy-ribonucleotide-3'-[RNA].. Endonuclease that catalyzes the cleavage of RNA on the 3' side of pyrimidine nucleotides. Acts on single-stranded and double-stranded RNA. This chain is Ribonuclease pancreatic gamma-type, found in Rattus fuscipes (Bush rat).